The sequence spans 720 residues: Collectin-12 (720 aa).

The Cytoplasmic portion of the chain corresponds to 1 to 37 (MKDDFNDEEEVQSFGYKRFGIQEGNECTKCKNDWALR). The chain crosses the membrane as a helical; Signal-anchor for type II membrane protein span at residues 38 to 58 (VAIALLYVLCALLTIAVAVLG). The Extracellular segment spans residues 59-720 (YKVVQRMDNV…RTNESKVPVL (662 aa)). 3 coiled-coil regions span residues 95–120 (EKSENATSELHSFKLEFQTLQKQLSD), 216–267 (ISSL…LAAN), and 377–408 (LHGLNNSVAETRAESTELKAQQEELAVRLDKE). The tract at residues 433–576 (FTILQGPPGP…GPPGLPGLPA (144 aa)) is disordered. Collagen-like domains lie at 444–503 (GPRG…PGPK) and 510–569 (GRQG…PGPP). A compositionally biased stretch (basic and acidic residues) spans 460 to 479 (PKGEKGEKGAPGDAGPKGEK). Over residues 488–503 (PGLKGPPGSRGSPGPK) the composition is skewed to low complexity. Residues 504–513 (GSRGSGGRQG) are compositionally biased toward gly residues. Over residues 527–560 (PGRDGQPGPTGPQGPQGLRGPAGPAGLEGARGPV) the composition is skewed to low complexity. Residues 562–576 (PIGPPGPPGLPGLPA) show a composition bias toward pro residues. Cystine bridges form between Cys604–Cys615, Cys634–Cys709, and Cys687–Cys701. One can recognise a C-type lectin domain in the interval 611 to 710 (FREQCYHFSA…CTERIGFICE (100 aa)). Ca(2+)-binding residues include Ile643, Asn645, and Glu649. Residues Lys670, Gln673, and Asp675 each coordinate a carbohydrate. Gln673, Asp675, Asn676, Glu685, Asp686, Asn697, Asp698, and Glu710 together coordinate Ca(2+). Glu685 contacts a carbohydrate. The a carbohydrate site is built by Asn697 and Asp698.

The protein resides in the membrane. In terms of biological role, scavenger receptor that displays several functions associated with host defense. Binds to carbohydrates. This Danio rerio (Zebrafish) protein is Collectin-12 (colec12).